The chain runs to 441 residues: D-inositol 3-phosphate glycosyltransferase (441 aa).

Residue His38 coordinates 1D-myo-inositol 3-phosphate. Residues 44–45 (QP) and Gly52 contribute to the UDP-N-acetyl-alpha-D-glucosamine site. 1D-myo-inositol 3-phosphate contacts are provided by residues 49–54 (DAGGMN), Lys107, Tyr140, Thr164, and Arg184. Residues Arg258, Lys263, and Gln316 each contribute to the UDP-N-acetyl-alpha-D-glucosamine site. 3 residues coordinate Mg(2+): Phe325, Gln326, and Ala328. UDP-N-acetyl-alpha-D-glucosamine-binding residues include Glu338 and Glu346. Thr352 is a binding site for Mg(2+).

Belongs to the glycosyltransferase group 1 family. MshA subfamily. As to quaternary structure, homodimer.

It catalyses the reaction 1D-myo-inositol 3-phosphate + UDP-N-acetyl-alpha-D-glucosamine = 1D-myo-inositol 2-acetamido-2-deoxy-alpha-D-glucopyranoside 3-phosphate + UDP + H(+). Catalyzes the transfer of a N-acetyl-glucosamine moiety to 1D-myo-inositol 3-phosphate to produce 1D-myo-inositol 2-acetamido-2-deoxy-glucopyranoside 3-phosphate in the mycothiol biosynthesis pathway. The protein is D-inositol 3-phosphate glycosyltransferase of Mycolicibacterium paratuberculosis (strain ATCC BAA-968 / K-10) (Mycobacterium paratuberculosis).